A 68-amino-acid polypeptide reads, in one-letter code: Phage-like element PBSX protein XtrA (68 aa).

This sequence to B.subtilis YqaO.

The protein is Phage-like element PBSX protein XtrA (xtrA) of Bacillus subtilis (strain 168).